The primary structure comprises 358 residues: Trace amine-associated receptor 7e (358 aa).

Topologically, residues 1–47 (MATGDDSFLWDQDSILSRDLFSATSAELCYENLNRSCVRSPYSPGPR) are extracellular. The N-linked (GlcNAc...) asparagine glycan is linked to asparagine 34. Disulfide bonds link cysteine 37/cysteine 201 and cysteine 120/cysteine 205. A helical transmembrane segment spans residues 48–68 (LILYAVFGFGAVLAVCGNLLV). Topologically, residues 69–83 (MTSILHFRQLHSPAN) are cytoplasmic. The chain crosses the membrane as a helical span at residues 84–104 (FLVASLACADFLVGLTVMPFS). At 105-121 (TVRSVEGCWYFGEIYCK) the chain is on the extracellular side. The helical transmembrane segment at 122-143 (LHTCFDVSFCSSSIFHLCFISV) threads the bilayer. Topologically, residues 144-166 (DRYIAVSDPLIYPTRFTASVSNK) are cytoplasmic. A helical membrane pass occupies residues 167–187 (CITFSWLLSISYGFSLIYTGA). Topologically, residues 188–212 (SEAGLEDLVSALTCVGGCQLAVNQS) are extracellular. N-linked (GlcNAc...) asparagine glycosylation is present at asparagine 210. The chain crosses the membrane as a helical span at residues 213-233 (WVFINFLLFLIPTLVMITVYS). The Cytoplasmic portion of the chain corresponds to 234-274 (KIFLIAKQQAQNIEKMSKQTARASDSYKDRVAKRERKAAKT). Residues 275–295 (LGIAVAAFLLSWLPYFIDSFI) traverse the membrane as a helical segment. Topologically, residues 296–309 (DAFLGFITPTYVYE) are extracellular. A helical membrane pass occupies residues 310–333 (ILVWIAYYNSAMNPLIYAFFYPWF). The Cytoplasmic segment spans residues 334-358 (RKAIKLTVTGKILRENSSTTNLFPE).

This sequence belongs to the G-protein coupled receptor 1 family. In terms of tissue distribution, specifically expressed in neurons of the olfactory epithelium.

The protein resides in the cell membrane. Its function is as follows. Olfactory receptor specific for N,N-dimethylalkylamines trace amines. Trace amine compounds are enriched in animal body fluids and act on trace amine-associated receptors (TAARs) to elicit both intraspecific and interspecific innate behaviors. Ligand-binding causes a conformation change that triggers signaling via G(s)-class of G alpha proteins (GNAL or GNAS). The polypeptide is Trace amine-associated receptor 7e (Mus musculus (Mouse)).